Here is a 571-residue protein sequence, read N- to C-terminus: FAD-binding monooxygenase VdtE (571 aa).

FAD contacts are provided by residues 44–47 (VWYW), 56–57 (DS), and Y62. 54–56 (RVD) provides a ligand contact to NADP(+). Residues 187-193 (TGASAVQ) and 210-211 (RT) each bind NADP(+).

Belongs to the FAD-binding monooxygenase family. The cofactor is FAD.

It carries out the reaction 9,10-dihydroxy-7-methoxy-3-(2-oxopropyl)-1H-benzo[g]isochromen-1-one + NADPH + O2 + H(+) = methyl 2-[(3S)-9,10-dihydroxy-7-methoxy-1-oxo-1H,3H,4H-naphtho[2,3-c]pyran-3-yl]acetate + NADP(+) + H2O. The catalysed reaction is (3S)-9,10-dihydroxy-7-methoxy-3-(2-oxopropyl)-1H,3H,4H-naphtho[2,3-c]pyran-1-one + NADPH + O2 + H(+) = semiviriditoxin + NADP(+) + H2O. The protein operates within secondary metabolite biosynthesis. FAD-binding monooxygenase; part of the gene cluster that mediates the biosynthesis of viriditoxin, one of the 'classical' secondary metabolites produced by fungi and that has antibacterial activity. The first step is performed by the polyketide synthase VdtA which condenses one acetyl-CoA and 6 malonyl-CoA units to form the heptaketide monomer backbone of viriditoxin. The product of VdtA is then O-methylated on C7 by the O-methyltransferase VdtC. The O-methyl group is important for the stereoselective coupling of the monomers at the final step of viriditoxin biosynthesis. The short-chain dehydrogenase/reductase VdtF then acts as a stereospecific reductase converting the pyrone to dihydropyrone via the reduction of the C3-C4 double bond. The FAD-binding monooxygenase VdtE then converts the ketone group into a methyl-ester group to yield semi-viriditoxin. Finally, the laccase VdtB is involved in dimerization of 2 semi-viriditoxin molecules to yield the final viriditoxin. VdtB is responsible for the regioselective 6,6'-coupling of semi-viriditoxin, which yields (M)-viriditoxin and (P)-viriditoxin at a ratio of 1:2. The non-catalytic carboxylesterase-like protein VdtD affects the stereochemistical outcome of the coupling. The highly reducing polyketide synthase VdtX is not involved in viriditoxin synthesis, but might possibly play a role in the production of additional metabolites not identified yet. The sequence is that of FAD-binding monooxygenase VdtE from Byssochlamys spectabilis (Paecilomyces variotii).